Here is a 356-residue protein sequence, read N- to C-terminus: uncharacterized protein (356 aa).

This is an uncharacterized protein from Methanocaldococcus jannaschii (strain ATCC 43067 / DSM 2661 / JAL-1 / JCM 10045 / NBRC 100440) (Methanococcus jannaschii).